The following is a 359-amino-acid chain: Peptide chain release factor 1 (359 aa).

Gln235 bears the N5-methylglutamine mark. The tract at residues 287–312 is disordered; sequence AQEASAMRSAQVGSGDRSERIRTYNF.

Belongs to the prokaryotic/mitochondrial release factor family. In terms of processing, methylated by PrmC. Methylation increases the termination efficiency of RF1.

The protein resides in the cytoplasm. Its function is as follows. Peptide chain release factor 1 directs the termination of translation in response to the peptide chain termination codons UAG and UAA. This Chlamydia trachomatis serovar L2 (strain ATCC VR-902B / DSM 19102 / 434/Bu) protein is Peptide chain release factor 1.